Consider the following 114-residue polypeptide: Lymphotactin (114 aa).

A signal peptide spans 1–21; the sequence is MRLLILALLGICSLTAYIVEG. A disulfide bridge connects residues Cys32 and Cys69. Residues 91–114 are disordered; sequence RNNMIQTKPTGTQQSTNTAVTLTG.

This sequence belongs to the intercrine gamma family. As to expression, highest level in spleen, lower in peripheral leukocytes and very low levels in lung, colon and small intestine.

It localises to the secreted. Chemotactic activity for lymphocytes but not for monocytes or neutrophils. In thymus, mediates medullary accumulation of thymic dendritic cells and contributes to regulatoy T cell development, playing a role in self-tolerance establishment. The chain is Lymphotactin (XCL1) from Homo sapiens (Human).